The following is a 414-amino-acid chain: tRNA dimethylallyltransferase (414 aa).

Position 33 to 40 (Ala33 to Thr40) interacts with ATP. Thr35–Thr40 provides a ligand contact to substrate. 3 interaction with substrate tRNA regions span residues Asp58–Leu61, Gln182–Arg186, and Arg266–Arg271.

The protein belongs to the IPP transferase family. As to quaternary structure, monomer. The cofactor is Mg(2+).

The enzyme catalyses adenosine(37) in tRNA + dimethylallyl diphosphate = N(6)-dimethylallyladenosine(37) in tRNA + diphosphate. Functionally, catalyzes the transfer of a dimethylallyl group onto the adenine at position 37 in tRNAs that read codons beginning with uridine, leading to the formation of N6-(dimethylallyl)adenosine (i(6)A). This chain is tRNA dimethylallyltransferase, found in Psychrobacter cryohalolentis (strain ATCC BAA-1226 / DSM 17306 / VKM B-2378 / K5).